A 125-amino-acid chain; its full sequence is Large ribosomal subunit protein bL17 (125 aa).

This sequence belongs to the bacterial ribosomal protein bL17 family. In terms of assembly, part of the 50S ribosomal subunit. Contacts protein L32.

In Acinetobacter baumannii (strain AB307-0294), this protein is Large ribosomal subunit protein bL17.